We begin with the raw amino-acid sequence, 421 residues long: Non-homologous end-joining factor LIF1 (421 aa).

Residues 1 to 196 are interaction with NEJ1; it reads MSQLTEFISC…VEQLAREREL (196 aa). The segment at 365-421 is disordered; sequence GIQISAGRSDEDYGDISGSESETDASAGEKKSSNHSEQSGNDREPCLQTESETDIET. The span at 391-409 shows a compositional bias: basic and acidic residues; it reads AGEKKSSNHSEQSGNDREP.

Belongs to the XRCC4-XLF family. XLF subfamily. As to quaternary structure, interacts with DNL4 (via BRCT domain). Interacts (via N-terminus) with NEJ1 (via C-terminus); the interaction is direct. The DNL4-LIF1 complex interacts with POL4.

The protein localises to the cytoplasm. Its subcellular location is the nucleus. In terms of biological role, involved in non-homologous repair of DNA double-strand breaks. Stabilizes DNL4. This is Non-homologous end-joining factor LIF1 (LIF1) from Saccharomyces cerevisiae (strain ATCC 204508 / S288c) (Baker's yeast).